Here is an 809-residue protein sequence, read N- to C-terminus: MEDEQPDSLEGWVPVREGLFAEPERHRLRFLVAWNGAEGKFAVTCHDRTAQQRRLREGARLGPEPEPKPEAAVSPSSWAGLLSAAGLRGAHRQLAALWPPLERCFPRLPPELDVGGGGAWGLGLGLWALLWPTRAGPGEAALQELCGQLERYLGAAADGCGGATVRDALFPAEGGAADCESPREFRERALRARWVEADARLRQVIQGHGKANTMVALMNVYQEEDEAYQELVTVATMFFQYLLQPFRAMREVATLCKLDILKSLDEDDLGPRRVVALEKEAEEWTRRAEEAVVSIQDITVNYFKETVKALAGMQKEMEQDAKRFGQAAWATAIPRLEKLQLMLARETLQLMRAKELCLNHKRAEIQGKMEDLPEQEKNTNVVDELEIQFYEIQLELYEVKFEILKNEEILLTTQLDSLKRLIKEKQDEVVYYDPCENPEELKVIDCVVGLQDDKNLEVKELRRQCQQLESKRGRICAKRASLRSRKDQCKENHRFRLQQAEESIRYSRQHHSIQMKRDKIKEEEQKKKEWINQERQKTLQRLRSFKDKRLAQSVRNTSGSEPVAPNLPSDLSQQMCLPASHAVSVIHPSSRKTRGVPLSEAGNVKSPKCQNCHGNIPVQVFVPVGDQTHSKSSEELSLPPPPPPPPPPPPPPPPPPPPLRALSSSSQAATHQNLGFRAPVKDDQPRPLVCESPAERPRDSLESFSCPGSMDEVLASLRHGRAPLRKVEVPAVRPPHASINEHILAAIRQGVKLKKVHPDLGPNPSSKPTSNRRTSDLERSIKAALQRIKRVSADSEEDSDEQDPGQWDG.

Residues 1-260 (MEDEQPDSLE…EVATLCKLDI (260 aa)) are mediates association with membranes. Positions 261–630 (LKSLDEDDLG…FVPVGDQTHS (370 aa)) are mediates interaction with microtubules. 3 coiled-coil regions span residues 271-298 (PRRV…IQDI), 384-479 (ELEI…CAKR), and 512-542 (SIQM…LQRL). Disordered stretches follow at residues 506–528 (YSRQ…QKKK), 546–571 (KDKR…PSDL), 586–612 (IHPS…CQNC), and 627–707 (QTHS…FSCP). The segment covering 515–528 (MKRDKIKEEEQKKK) has biased composition (basic and acidic residues). Ser606 carries the phosphoserine modification. Residues 631–809 (KSSEELSLPP…DEQDPGQWDG (179 aa)) are mediates actin nucleation. Residues 638-659 (LPPPPPPPPPPPPPPPPPPPPL) show a composition bias toward pro residues. Positions 662 to 673 (LSSSSQAATHQN) are enriched in polar residues. WH2 domains lie at 709-727 (SMDE…LRKV) and 739-756 (INEH…LKKV). The interval 754 to 809 (KKVHPDLGPNPSSKPTSNRRTSDLERSIKAALQRIKRVSADSEEDSDEQDPGQWDG) is disordered. The segment covering 763–772 (NPSSKPTSNR) has biased composition (polar residues). Positions 770-797 (SNRRTSDLERSIKAALQRIKRVSADSEE) form a coiled coil. Residues 794–803 (DSEEDSDEQD) are compositionally biased toward acidic residues. Ser795 carries the phosphoserine modification.

Interacts with ACTR3; indicative for an association with the ARP2/3 complex. Associates with microtubules; in vitro binds to tubulin heterodimer in a 1:1 stoichiometry; decorates microtubules with a repeat of 80 A along protofilaments. Interacts with RHOD (in GTP-bound form). As to expression, expressed in brain, lung, heart, colon and kidney (at protein level).

The protein resides in the cytoplasm. The protein localises to the endoplasmic reticulum-Golgi intermediate compartment. Its subcellular location is the cytoplasmic vesicle membrane. It localises to the golgi apparatus. It is found in the cis-Golgi network. Acts as a nucleation-promoting factor (NPF) that stimulates Arp2/3-mediated actin polymerization both at the Golgi apparatus and along tubular membranes. Its activity in membrane tubulation requires F-actin and interaction with microtubules. Proposed to use coordinated actin-nucleating and microtubule-binding activities of distinct WHAMM molecules to drive membrane tubule elongation; when MT-bound can recruit and remodel membrane vesicles but is prevented to activate the Arp2/3 complex. Involved as a regulator of Golgi positioning and morphology. Participates in vesicle transport between the reticulum endoplasmic and the Golgi complex. Required for RhoD-dependent actin reorganization such as in cell adhesion and cell migration. This is WASP homolog-associated protein with actin, membranes and microtubules (WHAMM) from Homo sapiens (Human).